A 131-amino-acid polypeptide reads, in one-letter code: Ribosome-binding factor A (131 aa).

Belongs to the RbfA family. As to quaternary structure, monomer. Binds 30S ribosomal subunits, but not 50S ribosomal subunits or 70S ribosomes.

It is found in the cytoplasm. Functionally, one of several proteins that assist in the late maturation steps of the functional core of the 30S ribosomal subunit. Associates with free 30S ribosomal subunits (but not with 30S subunits that are part of 70S ribosomes or polysomes). Required for efficient processing of 16S rRNA. May interact with the 5'-terminal helix region of 16S rRNA. In Thermotoga petrophila (strain ATCC BAA-488 / DSM 13995 / JCM 10881 / RKU-1), this protein is Ribosome-binding factor A.